The following is a 157-amino-acid chain: Phosphopantetheine adenylyltransferase (157 aa).

T10 is a binding site for substrate. ATP contacts are provided by residues 10 to 11 (TF) and H18. 3 residues coordinate substrate: K42, L74, and R88. Residues 89–91 (GLR), E99, and 124–130 (NAFISSS) each bind ATP.

The protein belongs to the bacterial CoaD family. In terms of assembly, homohexamer. Mg(2+) serves as cofactor.

Its subcellular location is the cytoplasm. It carries out the reaction (R)-4'-phosphopantetheine + ATP + H(+) = 3'-dephospho-CoA + diphosphate. The protein operates within cofactor biosynthesis; coenzyme A biosynthesis; CoA from (R)-pantothenate: step 4/5. Functionally, reversibly transfers an adenylyl group from ATP to 4'-phosphopantetheine, yielding dephospho-CoA (dPCoA) and pyrophosphate. The sequence is that of Phosphopantetheine adenylyltransferase from Helicobacter pylori (strain J99 / ATCC 700824) (Campylobacter pylori J99).